The following is a 195-amino-acid chain: Imidazoleglycerol-phosphate dehydratase (195 aa).

The protein belongs to the imidazoleglycerol-phosphate dehydratase family.

It is found in the cytoplasm. It carries out the reaction D-erythro-1-(imidazol-4-yl)glycerol 3-phosphate = 3-(imidazol-4-yl)-2-oxopropyl phosphate + H2O. The protein operates within amino-acid biosynthesis; L-histidine biosynthesis; L-histidine from 5-phospho-alpha-D-ribose 1-diphosphate: step 6/9. This is Imidazoleglycerol-phosphate dehydratase from Burkholderia pseudomallei (strain 1710b).